The primary structure comprises 439 residues: ATP-dependent protease ATPase subunit HslU (439 aa).

ATP is bound by residues Ile-17, 59–64 (GVGKTE), Asp-251, Glu-317, and Arg-389.

Belongs to the ClpX chaperone family. HslU subfamily. In terms of assembly, a double ring-shaped homohexamer of HslV is capped on each side by a ring-shaped HslU homohexamer. The assembly of the HslU/HslV complex is dependent on binding of ATP.

The protein localises to the cytoplasm. Its function is as follows. ATPase subunit of a proteasome-like degradation complex; this subunit has chaperone activity. The binding of ATP and its subsequent hydrolysis by HslU are essential for unfolding of protein substrates subsequently hydrolyzed by HslV. HslU recognizes the N-terminal part of its protein substrates and unfolds these before they are guided to HslV for hydrolysis. This chain is ATP-dependent protease ATPase subunit HslU, found in Campylobacter jejuni (strain RM1221).